Consider the following 291-residue polypeptide: MDARAINSREKADLKYPRNTYIIGDVQGCYRELQELLELIQFDSTKDRLGFVGDLVNRGPNSLEVLRFLKSLSSPLIVLGNHDLYLLILGYGLMPEDSYEHTLHAVLQAPDKLELLEWLRHCPLIRYEKSLSAVLVHAGLPPQWNIKESILHAEEISTALKGPHYLAFLKNLFGNEPSQWKEDLEGQDRLRYICNAFTRMRFCDAKGHLDLESEGKTNQAPSRFRPWFEWRNPQEDNVDIVFGHWAALNGQSSAPHTHALDTGCAWGYKLTAINLKTKERFSVPWQSALRM.

Belongs to the Ap4A hydrolase family.

It catalyses the reaction P(1),P(4)-bis(5'-adenosyl) tetraphosphate + H2O = 2 ADP + 2 H(+). Its function is as follows. Hydrolyzes diadenosine 5',5'''-P1,P4-tetraphosphate to yield ADP. This chain is Bis(5'-nucleosyl)-tetraphosphatase, symmetrical, found in Coxiella burnetii (strain CbuG_Q212) (Coxiella burnetii (strain Q212)).